Here is a 119-residue protein sequence, read N- to C-terminus: Large ribosomal subunit protein uL18 (119 aa).

This sequence belongs to the universal ribosomal protein uL18 family. In terms of assembly, part of the 50S ribosomal subunit; part of the 5S rRNA/L5/L18/L25 subcomplex. Contacts the 5S and 23S rRNAs.

Its function is as follows. This is one of the proteins that bind and probably mediate the attachment of the 5S RNA into the large ribosomal subunit, where it forms part of the central protuberance. This Clostridium botulinum (strain Okra / Type B1) protein is Large ribosomal subunit protein uL18.